The sequence spans 452 residues: Exodeoxyribonuclease 7 large subunit (452 aa).

This sequence belongs to the XseA family. As to quaternary structure, heterooligomer composed of large and small subunits.

It is found in the cytoplasm. It carries out the reaction Exonucleolytic cleavage in either 5'- to 3'- or 3'- to 5'-direction to yield nucleoside 5'-phosphates.. Functionally, bidirectionally degrades single-stranded DNA into large acid-insoluble oligonucleotides, which are then degraded further into small acid-soluble oligonucleotides. The sequence is that of Exodeoxyribonuclease 7 large subunit from Lysinibacillus sphaericus (strain C3-41).